The primary structure comprises 391 residues: MAKSKFERTKLHVNIGTIGHVDHGKTSLTAAITKYFGEFKAYDQIDAAPEERARGITISTAHVEYETDQRHYAHVDCPGHADYVKNMITGAAQMDGAILVVSAADGPMPQTREHILLARQVGVPAIVVFLNKVDQVDDAELLELVELEVRELLSKYDFPGDDIPIVKGSALAALEDSDKSIGEDAVRLLMSEVDRYIPTPERPVDQSFLMPIEDVFSISGRGTVVTGRVERGVVKVGEEIEIVGIRPTSKTTVTGVEMFRKLLDQGQAGDNIGALLRGIDREGIERGQVLAKPGSVTPHTKFKAEAYILTKDEGGRHTPFFTNYRPQFYFRTTDVTGIVTLPEGTEMVMPGDNVAMDVSLIVPIAMEEKLRFAIREGGRTVGAGIVSKIIE.

Residues 10 to 201 (KLHVNIGTIG…EVDRYIPTPE (192 aa)) form the tr-type G domain. Residues 19-26 (GHVDHGKT) form a G1 region. 19 to 26 (GHVDHGKT) lines the GTP pocket. Position 26 (T26) interacts with Mg(2+). The tract at residues 55 to 59 (GITIS) is G2. The interval 76–79 (DCPG) is G3. GTP-binding positions include 76–80 (DCPGH) and 131–134 (NKVD). The tract at residues 131–134 (NKVD) is G4. Positions 169–171 (SAL) are G5.

This sequence belongs to the TRAFAC class translation factor GTPase superfamily. Classic translation factor GTPase family. EF-Tu/EF-1A subfamily. As to quaternary structure, monomer.

It localises to the cytoplasm. It carries out the reaction GTP + H2O = GDP + phosphate + H(+). GTP hydrolase that promotes the GTP-dependent binding of aminoacyl-tRNA to the A-site of ribosomes during protein biosynthesis. This is Elongation factor Tu 1 from Bartonella bacilliformis (strain ATCC 35685 / KC583 / Herrer 020/F12,63).